We begin with the raw amino-acid sequence, 397 residues long: 16-O-methyltransferase bsc6 (397 aa).

D262 contributes to the S-adenosyl-L-methionine binding site. Catalysis depends on H302, which acts as the Proton acceptor.

The protein belongs to the class I-like SAM-binding methyltransferase superfamily. Cation-independent O-methyltransferase family. S-adenosyl-L-methionine serves as cofactor.

It functions in the pathway mycotoxin biosynthesis. In terms of biological role, 16-O-methyltransferase; part of the gene cluster that mediates the biosynthesis of the diterpene glucoside brassicicene C. In the first step of the brassicicene C biosynthesis, the bifunctional diterpene synthase bsc8 that possesses both prenyl transferase and terpene cyclase activity, converts isopentenyl diphosphate and dimethylallyl diphosphate into geranylgeranyl diphosphate (GGDP) that is further converted into fusicocca-2,10(14)-diene, the first precursor for brassicicene C. Fusicocca-2,10(14)-diene is then substrate of cytochrome P450 monooxygenase bsc1 for hydroxylation at the C-8 position. Oxidation at C-16 position to aldehyde is then catalyzed by the cytochrome P450 monooyxygenase bsc7, yielding fusicocca-2,10(14)-diene-8-beta,16-diol. Follows the isomerization of the double bond and reduction of aldehyde to alcohol catalyzed by the short-chain dehydrogenase/reductase bsc3 to yield the diol compound fusicocca-1,10(14)-diene-8 beta,16-diol. The next step is the oxidation at the C-3 position of fusicocca-2,10(14)-diene-8-beta,16-diol catalyzed by the alpha-ketoglutarate dependent dioxygenase bsc9, to produce a triol compound. Methylation of the hydroxy group at position 16 is performed by the methyltransferase bsc6. 16-O-methylation is followed by oxidation at the C-13 position to ketone and an alkyl shift of the methyl group leads to brassicicene C. Although the probable acetyltransferase bsc4 is included in the gene cluster, no acetylation reactions are necessary for brassicicene C biosynthesis. However, the fact that brassicicene E, which is a structurally related compound having an acetoxy group at position 12, was previously isolated from another strain of A.brassicicola suggests that the ATCC 96836 strain might also produce a small amount of brassicicene E. This is 16-O-methyltransferase bsc6 from Alternaria brassicicola (Dark leaf spot agent).